The chain runs to 94 residues: Large ribosomal subunit protein bL25 (94 aa).

The protein belongs to the bacterial ribosomal protein bL25 family. In terms of assembly, part of the 50S ribosomal subunit; part of the 5S rRNA/L5/L18/L25 subcomplex. Contacts the 5S rRNA. Binds to the 5S rRNA independently of L5 and L18.

In terms of biological role, this is one of the proteins that binds to the 5S RNA in the ribosome where it forms part of the central protuberance. The polypeptide is Large ribosomal subunit protein bL25 (Yersinia pestis bv. Antiqua (strain Antiqua)).